The chain runs to 289 residues: Acetyl-coenzyme A carboxylase carboxyl transferase subunit beta (289 aa).

The region spanning 28–289 (VMTKCPKCKK…QGGGMAVWQS (262 aa)) is the CoA carboxyltransferase N-terminal domain. Cys32, Cys35, Cys51, and Cys54 together coordinate Zn(2+). The C4-type zinc-finger motif lies at 32–54 (CPKCKKIMYTKELLKNLKVCVNC).

This sequence belongs to the AccD/PCCB family. In terms of assembly, acetyl-CoA carboxylase is a heterohexamer composed of biotin carboxyl carrier protein (AccB), biotin carboxylase (AccC) and two subunits each of ACCase subunit alpha (AccA) and ACCase subunit beta (AccD). The cofactor is Zn(2+).

It is found in the cytoplasm. The catalysed reaction is N(6)-carboxybiotinyl-L-lysyl-[protein] + acetyl-CoA = N(6)-biotinyl-L-lysyl-[protein] + malonyl-CoA. Its pathway is lipid metabolism; malonyl-CoA biosynthesis; malonyl-CoA from acetyl-CoA: step 1/1. Its function is as follows. Component of the acetyl coenzyme A carboxylase (ACC) complex. Biotin carboxylase (BC) catalyzes the carboxylation of biotin on its carrier protein (BCCP) and then the CO(2) group is transferred by the transcarboxylase to acetyl-CoA to form malonyl-CoA. In Bacillus mycoides (strain KBAB4) (Bacillus weihenstephanensis), this protein is Acetyl-coenzyme A carboxylase carboxyl transferase subunit beta.